The sequence spans 156 residues: Single-stranded DNA-binding protein 1 (156 aa).

One can recognise an SSB domain in the interval 1-104 (MLNRTILVGR…VVADSIQFLE (104 aa)). The disordered stretch occupies residues 122 to 146 (QTRGQSQYSNNKPVKDNPFANANCP).

Homotetramer.

In Staphylococcus aureus (strain MSSA476), this protein is Single-stranded DNA-binding protein 1 (ssb1).